The following is an 804-amino-acid chain: DNA mismatch repair protein MutS (804 aa).

ATP is bound at residue 614–621 (GPNMAGKS).

This sequence belongs to the DNA mismatch repair MutS family.

In terms of biological role, this protein is involved in the repair of mismatches in DNA. It is possible that it carries out the mismatch recognition step. This protein has a weak ATPase activity. The sequence is that of DNA mismatch repair protein MutS from Ehrlichia ruminantium (strain Welgevonden).